An 81-amino-acid polypeptide reads, in one-letter code: Albumin-1 (81 aa).

Residues 27-34 constitute a propeptide that is removed on maturation; sequence LSSVAKMI.

Post-translationally, three disulfide bonds are probably present. The C-terminal glycine may be removed from A1b.

Its function is as follows. A1b binds to basic 7S globulin (BG) and stimulates its phosphorylation activity. The protein is Albumin-1 (LEG1) of Lupinus angustifolius (Narrow-leaved blue lupine).